Consider the following 298-residue polypeptide: Bifunctional protein FolD (298 aa).

NADP(+) contacts are provided by residues 167–169 (GRS), Ser-192, and Ile-233.

The protein belongs to the tetrahydrofolate dehydrogenase/cyclohydrolase family. In terms of assembly, homodimer.

It carries out the reaction (6R)-5,10-methylene-5,6,7,8-tetrahydrofolate + NADP(+) = (6R)-5,10-methenyltetrahydrofolate + NADPH. The enzyme catalyses (6R)-5,10-methenyltetrahydrofolate + H2O = (6R)-10-formyltetrahydrofolate + H(+). Its pathway is one-carbon metabolism; tetrahydrofolate interconversion. Its function is as follows. Catalyzes the oxidation of 5,10-methylenetetrahydrofolate to 5,10-methenyltetrahydrofolate and then the hydrolysis of 5,10-methenyltetrahydrofolate to 10-formyltetrahydrofolate. The protein is Bifunctional protein FolD of Caulobacter sp. (strain K31).